Consider the following 182-residue polypeptide: MKTIIAAIFLGILMHAFAKECTLMAAASNFNSDKYFDVPHVYVTHSKNGPKEKVCREYNTTKNSDKTTSTTVVTLKTGGTQSIVLSCNNSPKSGVKGQYFMDCQVPGGTGGINIQLESSIIATDNKNYALVHFCPITGRGVTEDIVVLQTNKDNVDPGVTSAIKNYGWSLENWKSRKDAGCQ.

The N-terminal stretch at 1 to 18 is a signal peptide; sequence MKTIIAAIFLGILMHAFA. Disulfide bonds link cysteine 21–cysteine 134, cysteine 55–cysteine 181, and cysteine 87–cysteine 103.

Belongs to the calycin superfamily. Triabin family. As to expression, expressed in salivary glands.

The protein localises to the secreted. Its function is as follows. Inhibits platelet aggregation, vasoconstriction, and angiogenesis through binding to distinct eicosanoids involved in inflammation (acts as a scavenger), and has a role in inhibiting host innate immunity by impairing platelet-assisted formation of neutrophil extracellular traps (NETs). Inhibits platelet aggregation by collagen (IC(50)=30 nM), thromboxane A2 mimetic (TXA2 mimetic), or arachidonic acid (AA) without affecting aggregation induced by ADP, convulxin (GP6 agonist), PMA, and ristocetin (vWF-dependent platelet agglutinator). Binds with high affinity to TXA2, TXB2, prostaglandine H2 mimetic (PGH2 mimetic), PGD2, PGJ2, and PGF2alpha. Also interacts with 15(S)-hydroxyeicosatetraenoic acid (HETE), being the first calycin/lipocalin described to date to bind to a derivative of 15-lipoxygenase. Binding is not observed to other prostaglandins, leukotrienes, HETEs, lipids, and biogenic amines. It prevents contraction of rat uterus stimulated by PGF2alpha and induces relaxation of aorta previously contracted with TXA2 mimetic. In addition, it inhibits angiogenesis mediated by 15(S)-HETE and does not enhance inhibition of collagen-induced platelet aggregation by SQ29548 (TXA2 antagonist) and indomethacin. Also impairs platelet-assisted formation of neutrophil extracellular traps (NETs). NETs are web-like structures of DNA and proteins that play an important role in killing of pathogens. In addition, NETs are implicated in thrombus formation. In vivo, this protein exhibits antithrombotic activity in two distinct mice models that are highly dependent on platelets. It is noteworthy that it inhibits thrombosis without promoting excessive bleeding. This is Dipetalodipin from Dipetalogaster maximus (Blood-sucking bug).